The primary structure comprises 372 residues: MDVIRTAIGLMSGTSMDGIDVALIRTDGRGFIERGPFMGVPYDADFRGQLKRALELSRPLTDRSERPAELREIELELTLRHAIAVTAFMERFGLAADAVDVLGFHGQTVLHRPDEGLTIQIGDGGELAKRTAISVVYDMRANDMVHGGQGAPLVPAYHAALAGKFQQAGQAVCFVNIGGISNLTFIGTDGRISAFDSGPGNTLIDQWVEMQTGRTYDPGGEIGGRGKVVASLAERYLQSPFFRGNVRRSLDRGDFAPLQSEEASLEDGARTLAHVAAASIIKSGGFLPETPALYIVCGGGRLNATLMAEFSVMAERLGSRVLTAEEAGFDGDAMEAEAWAYLAVRSLDGLPLTFPGTTGVGAPVTGGVLATP.

13–20 (GTSMDGID) contributes to the ATP binding site.

It belongs to the anhydro-N-acetylmuramic acid kinase family.

It catalyses the reaction 1,6-anhydro-N-acetyl-beta-muramate + ATP + H2O = N-acetyl-D-muramate 6-phosphate + ADP + H(+). Its pathway is amino-sugar metabolism; 1,6-anhydro-N-acetylmuramate degradation. It functions in the pathway cell wall biogenesis; peptidoglycan recycling. In terms of biological role, catalyzes the specific phosphorylation of 1,6-anhydro-N-acetylmuramic acid (anhMurNAc) with the simultaneous cleavage of the 1,6-anhydro ring, generating MurNAc-6-P. Is required for the utilization of anhMurNAc either imported from the medium or derived from its own cell wall murein, and thus plays a role in cell wall recycling. The sequence is that of Anhydro-N-acetylmuramic acid kinase from Rhizobium johnstonii (strain DSM 114642 / LMG 32736 / 3841) (Rhizobium leguminosarum bv. viciae).